Reading from the N-terminus, the 559-residue chain is MVEKILIHRILTLFPNAIARKLLLMLTFILIFWIIYLASKDHTKFSFNLENHIILNQGNIFKKYSHSETPLCPAVSPKETELRIKDIMEKLDQQIPPRPFTHVNTTTSATHSTATILNPQDTYCRGDQLDILLEVRDHLGHRKQYGGDFLRARMYSTALMAGASGKVTDFNNGTYLVSFTLFWEGQVSLSLLLIHPSEGVSALWRARNQGCDRIIFTGLFANRSSNVFTECGLTLNTNAELCQYMDDRDQEAFYCVRPQHMPCEALTHMTTRTRNISYLSKEEWRLFHRSNIGVEMMKNFTPIEVIPCNKSENIKKNCQIGMKTPFPSGYTLKKMWITAFCKQIKFNETKNINDCLERKLIYLMGDSTLHQWIYYLQKAVKTLKYFDHHGAGIFKTHVLLDVERHILIQWKKHGHPFVTKKLFSVKDENYIPREIDQVAGDKNTAIVITLGQHFRPFPINIFIRRAINIQKAIERLFLRSPETKVILKTENTREIEQNAEMFSDFHGYIQNLIIRDIFVDLNVGIIDAWDMTIAYCTNNAHPPDYVIQNQIGMFLNYIC.

The helical transmembrane segment at 17–37 threads the bilayer; it reads AIARKLLLMLTFILIFWIIYL.

The protein belongs to the NXPE family.

The protein localises to the membrane. The polypeptide is NXPE family member 2 (NXPE2) (Homo sapiens (Human)).